We begin with the raw amino-acid sequence, 1036 residues long: Multidrug resistance protein MdtC (1036 aa).

10 helical membrane passes run 12-34 (VATT…LLPV), 336-353 (RALV…FLFL), 360-382 (LIPA…LCGF), 431-450 (VGFT…IPLL), 463-485 (FAIT…TPMM), 528-547 (WVLL…YINI), 853-875 (LFLI…ESYI), 895-917 (LELF…IGIV), 949-971 (LRFR…LVLS), and 986-1008 (IVGG…YLCF).

Belongs to the resistance-nodulation-cell division (RND) (TC 2.A.6) family. MdtC subfamily. As to quaternary structure, part of a tripartite efflux system composed of MdtA, MdtB and MdtC. MdtC forms a heteromultimer with MdtB.

It is found in the cell inner membrane. This is Multidrug resistance protein MdtC from Photorhabdus laumondii subsp. laumondii (strain DSM 15139 / CIP 105565 / TT01) (Photorhabdus luminescens subsp. laumondii).